The primary structure comprises 178 residues: N-alpha-acetyltransferase 20 (178 aa).

The N-acetyltransferase domain maps to Thr2–Ser157. The interval Asp159–Glu178 is disordered.

Belongs to the acetyltransferase family. ARD1 subfamily. Component of the N-terminal acetyltransferase B (NatB) complex which is composed of naa20 and naa25.

Its subcellular location is the cytoplasm. The protein localises to the nucleus. The catalysed reaction is N-terminal L-methionyl-L-asparaginyl-[protein] + acetyl-CoA = N-terminal N(alpha)-acetyl-L-methionyl-L-asparaginyl-[protein] + CoA + H(+). It catalyses the reaction N-terminal L-methionyl-L-glutaminyl-[protein] + acetyl-CoA = N-terminal N(alpha)-acetyl-L-methionyl-L-glutaminyl-[protein] + CoA + H(+). The enzyme catalyses N-terminal L-methionyl-L-aspartyl-[protein] + acetyl-CoA = N-terminal N(alpha)-acetyl-L-methionyl-L-aspartyl-[protein] + CoA + H(+). It carries out the reaction N-terminal L-methionyl-L-glutamyl-[protein] + acetyl-CoA = N-terminal N(alpha)-acetyl-L-methionyl-L-glutamyl-[protein] + CoA + H(+). Functionally, catalytic subunit of the NatB complex which catalyzes acetylation of the N-terminal methionine residues of peptides beginning with Met-Asp, Met-Glu, Met-Asn and Met-Gln. Proteins with cell cycle functions are overrepresented in the pool of NatB substrates. Required for maintaining the structure and function of actomyosin fibers and for proper cellular migration. This Xenopus tropicalis (Western clawed frog) protein is N-alpha-acetyltransferase 20 (naa20).